The chain runs to 551 residues: Glucans biosynthesis protein D (551 aa).

The tat-type signal signal peptide spans 1-32 (MDRRRFIKGSMAMAAVCGTSGIASLFSQAAFA).

The protein belongs to the OpgD/OpgG family. Post-translationally, predicted to be exported by the Tat system. The position of the signal peptide cleavage has not been experimentally proven.

The protein resides in the periplasm. Its pathway is glycan metabolism; osmoregulated periplasmic glucan (OPG) biosynthesis. Functionally, probably involved in the control of the structural glucose backbone of osmoregulated periplasmic glucans (OPGs). This is Glucans biosynthesis protein D from Escherichia coli O9:H4 (strain HS).